Reading from the N-terminus, the 499-residue chain is Probable dipeptidase B (499 aa).

The active site involves C26.

The protein belongs to the peptidase C69 family.

It carries out the reaction an L-aminoacyl-L-amino acid + H2O = 2 an L-alpha-amino acid. The polypeptide is Probable dipeptidase B (pepDB) (Streptococcus pyogenes serotype M6 (strain ATCC BAA-946 / MGAS10394)).